The chain runs to 498 residues: Probable cytosol aminopeptidase (498 aa).

Residues lysine 264 and aspartate 269 each contribute to the Mn(2+) site. Lysine 276 is an active-site residue. Mn(2+) contacts are provided by aspartate 287, aspartate 346, and glutamate 348. Residue arginine 350 is part of the active site.

Belongs to the peptidase M17 family. Requires Mn(2+) as cofactor.

It is found in the cytoplasm. It catalyses the reaction Release of an N-terminal amino acid, Xaa-|-Yaa-, in which Xaa is preferably Leu, but may be other amino acids including Pro although not Arg or Lys, and Yaa may be Pro. Amino acid amides and methyl esters are also readily hydrolyzed, but rates on arylamides are exceedingly low.. The enzyme catalyses Release of an N-terminal amino acid, preferentially leucine, but not glutamic or aspartic acids.. Its function is as follows. Presumably involved in the processing and regular turnover of intracellular proteins. Catalyzes the removal of unsubstituted N-terminal amino acids from various peptides. This Rhizobium rhizogenes (strain K84 / ATCC BAA-868) (Agrobacterium radiobacter) protein is Probable cytosol aminopeptidase.